A 468-amino-acid polypeptide reads, in one-letter code: 3-isopropylmalate dehydratase large subunit (468 aa).

3 residues coordinate [4Fe-4S] cluster: Cys-349, Cys-409, and Cys-412.

This sequence belongs to the aconitase/IPM isomerase family. LeuC type 1 subfamily. Heterodimer of LeuC and LeuD. It depends on [4Fe-4S] cluster as a cofactor.

The catalysed reaction is (2R,3S)-3-isopropylmalate = (2S)-2-isopropylmalate. It participates in amino-acid biosynthesis; L-leucine biosynthesis; L-leucine from 3-methyl-2-oxobutanoate: step 2/4. Functionally, catalyzes the isomerization between 2-isopropylmalate and 3-isopropylmalate, via the formation of 2-isopropylmaleate. This Ruegeria pomeroyi (strain ATCC 700808 / DSM 15171 / DSS-3) (Silicibacter pomeroyi) protein is 3-isopropylmalate dehydratase large subunit.